The following is a 541-amino-acid chain: Putative nucleobase-ascorbate transporter 10 (541 aa).

A run of 12 helical transmembrane segments spans residues 52-72 (LLSLGITVLIPSVLVPLMGGG), 79-99 (VIQTLLFVSGLTTLFQSFFGT), 101-121 (LPVIAVASYAYIIPITSIIYS), 141-161 (IQGALIITGCFQVLICILGVW), 173-193 (IAPLATFTGLGLYHIGFPLLA), 196-216 (VEVGLPGLILLIFVTQYLPRF), 235-255 (GMILCIPLVWLFAQLLTSSGV), 299-319 (SFAMMAASFVTLFESTGLFYA), 376-396 (RVIQISAAFMIFFSIFGKFGA), 397-417 (FFASIPLPIMASLYCIVLCFV), 433-453 (FNIKFILGFSFFMAISIPQYF), and 476-496 (VIFMSHTTVAAIIAIVLDCTL).

It belongs to the nucleobase:cation symporter-2 (NCS2) (TC 2.A.40) family.

It localises to the membrane. This chain is Putative nucleobase-ascorbate transporter 10 (NAT10), found in Arabidopsis thaliana (Mouse-ear cress).